The sequence spans 270 residues: Triosephosphate isomerase (270 aa).

27-29 lines the substrate pocket; it reads NWK. Residue histidine 114 is the Electrophile of the active site. Residue glutamate 184 is the Proton acceptor of the active site. Substrate contacts are provided by residues glycine 190, serine 230, and 251–252; that span reads GG.

It belongs to the triosephosphate isomerase family. In terms of assembly, homodimer.

Its subcellular location is the cytoplasm. It catalyses the reaction D-glyceraldehyde 3-phosphate = dihydroxyacetone phosphate. It participates in carbohydrate biosynthesis; gluconeogenesis. The protein operates within carbohydrate degradation; glycolysis; D-glyceraldehyde 3-phosphate from glycerone phosphate: step 1/1. In terms of biological role, involved in the gluconeogenesis. Catalyzes stereospecifically the conversion of dihydroxyacetone phosphate (DHAP) to D-glyceraldehyde-3-phosphate (G3P). In Chlamydia muridarum (strain MoPn / Nigg), this protein is Triosephosphate isomerase.